The chain runs to 229 residues: C-&gt;U-editing enzyme APOBEC-1 (229 aa).

Positions 10-134 (VDPTLRRRIE…QRNRQGLRDL (125 aa)) constitute a CMP/dCMP-type deaminase domain. His-61 contacts Zn(2+). Glu-63 acts as the Proton donor in catalysis. Zn(2+) contacts are provided by Cys-93 and Cys-96.

Belongs to the cytidine and deoxycytidylate deaminase family. As to quaternary structure, homodimer. Interacts with A1CF; form an mRNA editing complex. Interacts with RBM47; form an mRNA editing complex. Found in a complex with CELF2/CUGBP2 and A1CF. Interacts with HNRPAB. Interacts with SYNCRIP. It depends on Zn(2+) as a cofactor. Expressed in the spleen. Expressed at lower level in the kidney, testis, lung, brain and liver.

Its subcellular location is the cytoplasm. The protein localises to the nucleus. It carries out the reaction a cytidine in mRNA + H2O + H(+) = a uridine in mRNA + NH4(+). The catalysed reaction is cytidine(6666) in apoB mRNA + H2O + H(+) = uridine(6666) in apoB mRNA + NH4(+). Cytidine deaminase catalyzing the cytidine to uridine postranscriptional editing of a variety of mRNAs. Form complexes with cofactors that confer differential editing activity and selectivity. Responsible for the postranscriptional editing of a CAA codon for Gln to a UAA codon for stop in the apolipoprotein B mRNA. Also involved in CGA (Arg) to UGA (Stop) editing in the NF1 mRNA. May also play a role in the epigenetic regulation of gene expression by participating in DNA demethylation. The protein is C-&gt;U-editing enzyme APOBEC-1 of Mus musculus (Mouse).